A 126-amino-acid chain; its full sequence is Sperm-specific H1/protamine-like protein type 2 (126 aa).

The H15 domain maps to Lys-5–Lys-84. The segment at Ser-74–Asn-126 is disordered. The segment covering Lys-90–Lys-120 has biased composition (basic residues).

OE2 and OE3 are produced by post-translational cleavage of a common precursor. As to expression, sperm.

It is found in the nucleus. It localises to the chromosome. Its function is as follows. Linker histones are implicated in chromatin remodeling and/or transcriptional regulation during spermiogenesis, the process of spermatid maturation into spermatozoa. Protamines substitute for histones in the chromatin of sperm during the haploid phase of spermatogenesis. They compact sperm DNA into a highly condensed, stable and inactive complex. The chain is Sperm-specific H1/protamine-like protein type 2 from Ostrea edulis (Native oyster).